The primary structure comprises 491 residues: MANYFNTLNLRQQLAQLGKCRFMGRDEFADGASYLQGKKVVIVGCGAQGLNQGLNMRDSGLDISYALRKEAIAEKRASWRKATENGFKVGTYEELIPQADLVINLTPDKQHSDVVRSVQPLMKDGAALGYSHGFNIVEVGEQIRKDITVVMVAPKCPGTEVREEYKRGFGVPTLIAVHPENDPKGEGMAIAKAWAAATGGHRAGVLESSFVAEVKSDLMGEQTILCGMLQAGSLLCFDKLVEEGTDPAYAEKLIQFGWETITEALKQGGITLMMDRLSNPAKLRAYALSEQLKAIMAPLFQKHMDDIISGEFSSGMMADWANDDKKLLTWREETGKTAFETAPQYEGKIGEQEYFDKGVLMIAMVKAGVELAFETMVDSGIIEESAYYESLHELPLIANTIARKRLYEMNVVISDTAEYGNYLFSYACVPLLKPFMAELQPGDLGKAIAEGSVDNAQLRDVNDAIRSHAIEKVGQKLRGYMTDMKRIAVAG.

The KARI N-terminal Rossmann domain occupies 15 to 208 (AQLGKCRFMG…GGHRAGVLES (194 aa)). Residues 45 to 48 (CGAQ), Arg-68, Arg-76, Ser-78, and 108 to 110 (DKQ) contribute to the NADP(+) site. Residue His-132 is part of the active site. Position 158 (Gly-158) interacts with NADP(+). 2 KARI C-terminal knotted domains span residues 209–344 (SFVA…TAPQ) and 345–484 (YEGK…MTDM). Mg(2+) contacts are provided by Asp-217, Glu-221, Glu-389, and Glu-393. Ser-414 lines the substrate pocket.

The protein belongs to the ketol-acid reductoisomerase family. Mg(2+) is required as a cofactor.

It catalyses the reaction (2R)-2,3-dihydroxy-3-methylbutanoate + NADP(+) = (2S)-2-acetolactate + NADPH + H(+). It carries out the reaction (2R,3R)-2,3-dihydroxy-3-methylpentanoate + NADP(+) = (S)-2-ethyl-2-hydroxy-3-oxobutanoate + NADPH + H(+). It participates in amino-acid biosynthesis; L-isoleucine biosynthesis; L-isoleucine from 2-oxobutanoate: step 2/4. It functions in the pathway amino-acid biosynthesis; L-valine biosynthesis; L-valine from pyruvate: step 2/4. Its function is as follows. Involved in the biosynthesis of branched-chain amino acids (BCAA). Catalyzes an alkyl-migration followed by a ketol-acid reduction of (S)-2-acetolactate (S2AL) to yield (R)-2,3-dihydroxy-isovalerate. In the isomerase reaction, S2AL is rearranged via a Mg-dependent methyl migration to produce 3-hydroxy-3-methyl-2-ketobutyrate (HMKB). In the reductase reaction, this 2-ketoacid undergoes a metal-dependent reduction by NADPH to yield (R)-2,3-dihydroxy-isovalerate. The polypeptide is Ketol-acid reductoisomerase (NADP(+)) (Salmonella arizonae (strain ATCC BAA-731 / CDC346-86 / RSK2980)).